The chain runs to 215 residues: Ribosomal RNA small subunit methyltransferase G (215 aa).

Residues Gly77, Phe82, 130–131 (IE), and Arg146 each bind S-adenosyl-L-methionine.

This sequence belongs to the methyltransferase superfamily. RNA methyltransferase RsmG family.

Its subcellular location is the cytoplasm. It catalyses the reaction guanosine(527) in 16S rRNA + S-adenosyl-L-methionine = N(7)-methylguanosine(527) in 16S rRNA + S-adenosyl-L-homocysteine. Functionally, specifically methylates the N7 position of guanine in position 527 of 16S rRNA. The chain is Ribosomal RNA small subunit methyltransferase G from Bartonella quintana (strain Toulouse) (Rochalimaea quintana).